We begin with the raw amino-acid sequence, 126 residues long: Holo-[acyl-carrier-protein] synthase (126 aa).

Residues Asp8 and Glu57 each coordinate Mg(2+).

This sequence belongs to the P-Pant transferase superfamily. AcpS family. Mg(2+) is required as a cofactor.

It is found in the cytoplasm. It catalyses the reaction apo-[ACP] + CoA = holo-[ACP] + adenosine 3',5'-bisphosphate + H(+). Functionally, transfers the 4'-phosphopantetheine moiety from coenzyme A to a Ser of acyl-carrier-protein. The polypeptide is Holo-[acyl-carrier-protein] synthase (Vibrio cholerae serotype O1 (strain ATCC 39541 / Classical Ogawa 395 / O395)).